Consider the following 185-residue polypeptide: Elongation factor P (185 aa).

It belongs to the elongation factor P family.

The protein resides in the cytoplasm. Its pathway is protein biosynthesis; polypeptide chain elongation. Functionally, involved in peptide bond synthesis. Stimulates efficient translation and peptide-bond synthesis on native or reconstituted 70S ribosomes in vitro. Probably functions indirectly by altering the affinity of the ribosome for aminoacyl-tRNA, thus increasing their reactivity as acceptors for peptidyl transferase. The sequence is that of Elongation factor P from Cyanothece sp. (strain PCC 7425 / ATCC 29141).